Here is a 315-residue protein sequence, read N- to C-terminus: Gamma-hemolysin component C (315 aa).

The N-terminal stretch at 1–29 (MLKNKILTTTLSVSLLAPLANPLLENAKA) is a signal peptide.

Belongs to the aerolysin family. As to quaternary structure, toxicity requires sequential binding and synergistic association of a class S and a class F component which form heterooligomeric complexes. HlgB (class F) associates with either hlgA thus forming an AB toxin or with hlgC thus forming a CB toxin.

Its subcellular location is the secreted. Functionally, toxin that seems to act by forming pores in the membrane of the cell. Has a hemolytic and a leucotoxic activity. This is Gamma-hemolysin component C (hlgC) from Staphylococcus aureus (strain NCTC 8325 / PS 47).